Consider the following 498-residue polypeptide: 3-octaprenyl-4-hydroxybenzoate carboxy-lyase (498 aa).

Residue Asn-176 participates in Mn(2+) binding. Residues 179–181, 193–195, and 198–199 contribute to the prenylated FMN site; these read IYR, RWL, and RG. Glu-242 is a binding site for Mn(2+). Catalysis depends on Asp-291, which acts as the Proton donor.

Belongs to the UbiD family. As to quaternary structure, homohexamer. Prenylated FMN is required as a cofactor. Requires Mn(2+) as cofactor.

The protein resides in the cell membrane. It carries out the reaction a 4-hydroxy-3-(all-trans-polyprenyl)benzoate + H(+) = a 2-(all-trans-polyprenyl)phenol + CO2. It functions in the pathway cofactor biosynthesis; ubiquinone biosynthesis. Its function is as follows. Catalyzes the decarboxylation of 3-octaprenyl-4-hydroxy benzoate to 2-octaprenylphenol, an intermediate step in ubiquinone biosynthesis. This is 3-octaprenyl-4-hydroxybenzoate carboxy-lyase from Escherichia coli O6:K15:H31 (strain 536 / UPEC).